Here is a 265-residue protein sequence, read N- to C-terminus: 1-(5-phosphoribosyl)-5-[(5-phosphoribosylamino)methylideneamino] imidazole-4-carboxamide isomerase (265 aa).

Aspartate 8 functions as the Proton acceptor in the catalytic mechanism. The active-site Proton donor is the aspartate 139.

It belongs to the HisA/HisF family.

The protein resides in the cytoplasm. It carries out the reaction 1-(5-phospho-beta-D-ribosyl)-5-[(5-phospho-beta-D-ribosylamino)methylideneamino]imidazole-4-carboxamide = 5-[(5-phospho-1-deoxy-D-ribulos-1-ylimino)methylamino]-1-(5-phospho-beta-D-ribosyl)imidazole-4-carboxamide. It participates in amino-acid biosynthesis; L-histidine biosynthesis; L-histidine from 5-phospho-alpha-D-ribose 1-diphosphate: step 4/9. This chain is 1-(5-phosphoribosyl)-5-[(5-phosphoribosylamino)methylideneamino] imidazole-4-carboxamide isomerase, found in Herminiimonas arsenicoxydans.